Consider the following 231-residue polypeptide: LexA repressor (231 aa).

Residues 26–46 (FDEMKDALDLRSKSGIHRLIT) constitute a DNA-binding region (H-T-H motif). Active-site for autocatalytic cleavage activity residues include Ser152 and Lys190.

Belongs to the peptidase S24 family. In terms of assembly, homodimer.

The catalysed reaction is Hydrolysis of Ala-|-Gly bond in repressor LexA.. Functionally, represses a number of genes involved in the response to DNA damage (SOS response), including recA and lexA. In the presence of single-stranded DNA, RecA interacts with LexA causing an autocatalytic cleavage which disrupts the DNA-binding part of LexA, leading to derepression of the SOS regulon and eventually DNA repair. The polypeptide is LexA repressor (Dinoroseobacter shibae (strain DSM 16493 / NCIMB 14021 / DFL 12)).